Consider the following 169-residue polypeptide: MNVLIISDSHGLEEELQTIAKRHEAEVDLMIHCGDSELETRHPALEPYAVVKGNCDFAGDFKDELLLTAGSRKILVTHGHLHGIKQTLLNVYYRAEELGADVICFGHSHIAGSEVLRGKLMINPGSIRLPRVRRTESYAILTLENDAATVRFYDQAGNEIEDLQNRVTL.

Positions 8, 10, 35, 54, 78, 107, and 109 each coordinate Mn(2+).

The protein belongs to the metallophosphoesterase superfamily. YfcE family. It depends on Mn(2+) as a cofactor.

The polypeptide is Probable metallophosphoesterase YsnB (ysnB) (Bacillus subtilis (strain 168)).